We begin with the raw amino-acid sequence, 184 residues long: Putative manganese efflux pump MntP (184 aa).

5 consecutive transmembrane segments (helical) span residues 39–59 (IFGV…LSFV), 65–85 (IDHF…ILEA), 102–122 (LALG…TFSF), 132–152 (LIIG…GKIL), and 161–181 (LVLG…THLV).

This sequence belongs to the MntP (TC 9.B.29) family.

Its subcellular location is the cell inner membrane. Functionally, probably functions as a manganese efflux pump. The sequence is that of Putative manganese efflux pump MntP from Campylobacter curvus (strain 525.92).